The sequence spans 374 residues: Muconate cycloisomerase 1 (374 aa).

It belongs to the cycloisomerase 2 family. In terms of assembly, homotetramer.

It catalyses the reaction (S)-muconolactone = cis,cis-muconate + H(+). It participates in aromatic compound metabolism; beta-ketoadipate pathway; 5-oxo-4,5-dihydro-2-furylacetate from catechol: step 2/3. Catalyzes a syn cycloisomerization. In Cutaneotrichosporon cutaneum (Yeast), this protein is Muconate cycloisomerase 1.